We begin with the raw amino-acid sequence, 427 residues long: Enolase (427 aa).

Gln163 is a binding site for (2R)-2-phosphoglycerate. The active-site Proton donor is the Glu205. Asp242, Glu285, and Asp312 together coordinate Mg(2+). 4 residues coordinate (2R)-2-phosphoglycerate: Lys337, Arg366, Ser367, and Lys388. Lys337 acts as the Proton acceptor in catalysis.

Belongs to the enolase family. It depends on Mg(2+) as a cofactor.

Its subcellular location is the cytoplasm. The protein resides in the secreted. It is found in the cell surface. The enzyme catalyses (2R)-2-phosphoglycerate = phosphoenolpyruvate + H2O. Its pathway is carbohydrate degradation; glycolysis; pyruvate from D-glyceraldehyde 3-phosphate: step 4/5. Its function is as follows. Catalyzes the reversible conversion of 2-phosphoglycerate (2-PG) into phosphoenolpyruvate (PEP). It is essential for the degradation of carbohydrates via glycolysis. The polypeptide is Enolase (Burkholderia mallei (strain NCTC 10247)).